The following is a 466-amino-acid chain: Cysteine--tRNA ligase (466 aa).

Residue cysteine 28 participates in Zn(2+) binding. A 'HIGH' region motif is present at residues 30 to 40 (PTVYNFFHIGN). The Zn(2+) site is built by cysteine 208, histidine 233, and glutamate 237. The short motif at 265–269 (KMSKS) is the 'KMSKS' region element. Lysine 268 is an ATP binding site.

Belongs to the class-I aminoacyl-tRNA synthetase family. In terms of assembly, monomer. Requires Zn(2+) as cofactor.

It localises to the cytoplasm. It carries out the reaction tRNA(Cys) + L-cysteine + ATP = L-cysteinyl-tRNA(Cys) + AMP + diphosphate. In Clostridium perfringens (strain 13 / Type A), this protein is Cysteine--tRNA ligase.